The sequence spans 444 residues: 23S rRNA (uracil(1939)-C(5))-methyltransferase RlmD (444 aa).

Residues 5 to 67 (RNRFDRTPFQ…RHFDEAKTVE (63 aa)) enclose the TRAM domain. Cys80, Cys86, Cys89, and Cys168 together coordinate [4Fe-4S] cluster. Residues Gln276, Phe305, Asn310, Glu326, Asp353, and Asp374 each coordinate S-adenosyl-L-methionine. Cys400 acts as the Nucleophile in catalysis.

This sequence belongs to the class I-like SAM-binding methyltransferase superfamily. RNA M5U methyltransferase family. RlmD subfamily.

It carries out the reaction uridine(1939) in 23S rRNA + S-adenosyl-L-methionine = 5-methyluridine(1939) in 23S rRNA + S-adenosyl-L-homocysteine + H(+). Its function is as follows. Catalyzes the formation of 5-methyl-uridine at position 1939 (m5U1939) in 23S rRNA. The polypeptide is 23S rRNA (uracil(1939)-C(5))-methyltransferase RlmD (Xanthomonas oryzae pv. oryzae (strain KACC10331 / KXO85)).